Here is a 556-residue protein sequence, read N- to C-terminus: Glutamine--tRNA ligase (556 aa).

The short motif at proline 34–histidine 44 is the 'HIGH' region element. ATP-binding positions include glutamate 35–asparagine 37 and histidine 41–alanine 47. L-glutamine contacts are provided by aspartate 67 and tyrosine 212. Residues threonine 231, arginine 261–leucine 262, and methionine 269–lysine 271 contribute to the ATP site. Residues leucine 268 to arginine 272 carry the 'KMSKS' region motif.

This sequence belongs to the class-I aminoacyl-tRNA synthetase family. In terms of assembly, monomer.

The protein localises to the cytoplasm. It catalyses the reaction tRNA(Gln) + L-glutamine + ATP = L-glutaminyl-tRNA(Gln) + AMP + diphosphate. The chain is Glutamine--tRNA ligase from Colwellia psychrerythraea (strain 34H / ATCC BAA-681) (Vibrio psychroerythus).